Consider the following 261-residue polypeptide: Glutamate 5-kinase (261 aa).

An ATP-binding site is contributed by lysine 7. Positions 46, 131, and 147 each coordinate substrate. ATP-binding positions include 167-168 (SD) and 209-215 (TGGIVTK).

It belongs to the glutamate 5-kinase family.

It is found in the cytoplasm. It carries out the reaction L-glutamate + ATP = L-glutamyl 5-phosphate + ADP. It participates in amino-acid biosynthesis; L-proline biosynthesis; L-glutamate 5-semialdehyde from L-glutamate: step 1/2. Its function is as follows. Catalyzes the transfer of a phosphate group to glutamate to form L-glutamate 5-phosphate. This chain is Glutamate 5-kinase, found in Wolinella succinogenes (strain ATCC 29543 / DSM 1740 / CCUG 13145 / JCM 31913 / LMG 7466 / NCTC 11488 / FDC 602W) (Vibrio succinogenes).